The sequence spans 353 residues: Photosystem II D2 protein (353 aa).

Threonine 2 is modified (N-acetylthreonine). A Phosphothreonine modification is found at threonine 2. Residues 41–61 (CAYFALGGWFTGTTFVTSWYT) traverse the membrane as a helical segment. Histidine 118 lines the chlorophyll a pocket. A helical membrane pass occupies residues 125–141 (GFMLRQFELARSVQLRP). Residues glutamine 130 and asparagine 143 each coordinate pheophytin a. The helical transmembrane segment at 153-166 (VFVSVFLIYPLGQS) threads the bilayer. Histidine 198 lines the chlorophyll a pocket. The helical transmembrane segment at 208–228 (AALLCAIHGATVENLYFEDGD) threads the bilayer. A plastoquinone contacts are provided by histidine 215 and phenylalanine 262. A Fe cation-binding site is contributed by histidine 215. Histidine 269 serves as a coordination point for Fe cation. The helical transmembrane segment at 279–295 (GLWMSALGVVGLALNLR) threads the bilayer.

The protein belongs to the reaction center PufL/M/PsbA/D family. PSII is composed of 1 copy each of membrane proteins PsbA, PsbB, PsbC, PsbD, PsbE, PsbF, PsbH, PsbI, PsbJ, PsbK, PsbL, PsbM, PsbT, PsbX, PsbY, PsbZ, Psb30/Ycf12, at least 3 peripheral proteins of the oxygen-evolving complex and a large number of cofactors. It forms dimeric complexes. The cofactor is The D1/D2 heterodimer binds P680, chlorophylls that are the primary electron donor of PSII, and subsequent electron acceptors. It shares a non-heme iron and each subunit binds pheophytin, quinone, additional chlorophylls, carotenoids and lipids. There is also a Cl(-1) ion associated with D1 and D2, which is required for oxygen evolution. The PSII complex binds additional chlorophylls, carotenoids and specific lipids..

Its subcellular location is the plastid. The protein resides in the chloroplast thylakoid membrane. The enzyme catalyses 2 a plastoquinone + 4 hnu + 2 H2O = 2 a plastoquinol + O2. In terms of biological role, photosystem II (PSII) is a light-driven water:plastoquinone oxidoreductase that uses light energy to abstract electrons from H(2)O, generating O(2) and a proton gradient subsequently used for ATP formation. It consists of a core antenna complex that captures photons, and an electron transfer chain that converts photonic excitation into a charge separation. The D1/D2 (PsbA/PsbD) reaction center heterodimer binds P680, the primary electron donor of PSII as well as several subsequent electron acceptors. D2 is needed for assembly of a stable PSII complex. The polypeptide is Photosystem II D2 protein (Panax ginseng (Korean ginseng)).